The chain runs to 181 residues: Oligoribonuclease (181 aa).

The Exonuclease domain maps to 8–171 (LIWIDLEMTG…DDIRESVAEL (164 aa)). Residue tyrosine 129 is part of the active site.

The protein belongs to the oligoribonuclease family.

It is found in the cytoplasm. In terms of biological role, 3'-to-5' exoribonuclease specific for small oligoribonucleotides. The sequence is that of Oligoribonuclease from Photorhabdus laumondii subsp. laumondii (strain DSM 15139 / CIP 105565 / TT01) (Photorhabdus luminescens subsp. laumondii).